A 435-amino-acid chain; its full sequence is 3-ketoacyl-CoA thiolase (435 aa).

The active-site Acyl-thioester intermediate is the Cys98. Catalysis depends on proton acceptor residues His391 and Cys421.

Belongs to the thiolase-like superfamily. Thiolase family. Heterotetramer of two alpha chains (FadJ) and two beta chains (FadI).

It is found in the cytoplasm. It catalyses the reaction an acyl-CoA + acetyl-CoA = a 3-oxoacyl-CoA + CoA. It participates in lipid metabolism; fatty acid beta-oxidation. Functionally, catalyzes the final step of fatty acid oxidation in which acetyl-CoA is released and the CoA ester of a fatty acid two carbons shorter is formed. This Colwellia psychrerythraea (strain 34H / ATCC BAA-681) (Vibrio psychroerythus) protein is 3-ketoacyl-CoA thiolase.